We begin with the raw amino-acid sequence, 221 residues long: Protein Pisl_1005 (221 aa).

An AMMECR1 domain is found at 8–201 (EEGAYLVKLA…EKTPGGEIYE (194 aa)).

The protein is Protein Pisl_1005 of Pyrobaculum islandicum (strain DSM 4184 / JCM 9189 / GEO3).